Here is a 438-residue protein sequence, read N- to C-terminus: MLDINLFREEKGGNPEIVRESQRRRGASVEIVDEIIKLDKEWRQRQFELEQLRKDFNRINKEVAKLRISGGDASSLIKNTEENKDSTAKKQAEVQEARTALYSKLETVGNLVHDSVPVSNDEADNAVVRTWGERREETNLKNHVELVELLGIADLKKGANVAGGRGYYLKGDGVRLNQALINFGLDFLEKRKYTALQTPFFMRKDIMGKCAQLAQFDEELYKVTGEGDDKYLIATAEQPLCAYHIDDWIHPNELPLRYAGYSSCFRKEAGSHGRDTLGIFRVHQFEKVEQFCLTKPSGNDSWEMHEEMIKNSEEFYQMLKLPYQVVSIVSGALNDAAAKKYDLEAWFPASKTYRELVSCSNCTDYQSRKLEIRCGQKKGNEQAKQYCHLLNSTLTATERTLCCILENYQTEKGVAIPEVLQPFMGGKTFLDFLKKIKK.

235–237 serves as a coordination point for L-serine; sequence TAE. Residues 266–268 and Val282 contribute to the ATP site; that span reads RKE. Glu289 is an L-serine binding site. 355–358 is a binding site for ATP; sequence ELVS. L-serine is bound at residue Thr393.

The protein belongs to the class-II aminoacyl-tRNA synthetase family. Type-1 seryl-tRNA synthetase subfamily. Homodimer. The tRNA molecule binds across the dimer.

It catalyses the reaction tRNA(Ser) + L-serine + ATP = L-seryl-tRNA(Ser) + AMP + diphosphate + H(+). It carries out the reaction tRNA(Sec) + L-serine + ATP = L-seryl-tRNA(Sec) + AMP + diphosphate + H(+). The protein operates within aminoacyl-tRNA biosynthesis; selenocysteinyl-tRNA(Sec) biosynthesis; L-seryl-tRNA(Sec) from L-serine and tRNA(Sec): step 1/1. Its function is as follows. Catalyzes the attachment of serine to tRNA(Ser). Is also able to aminoacylate tRNA(Sec) with serine, to form the misacylated tRNA L-seryl-tRNA(Sec), which will be further converted into selenocysteinyl-tRNA(Sec). This is Serine--tRNA ligase from Helianthus annuus (Common sunflower).